The chain runs to 49 residues: Large ribosomal subunit protein bL33 (49 aa).

This sequence belongs to the bacterial ribosomal protein bL33 family.

The polypeptide is Large ribosomal subunit protein bL33 (Caldanaerobacter subterraneus subsp. tengcongensis (strain DSM 15242 / JCM 11007 / NBRC 100824 / MB4) (Thermoanaerobacter tengcongensis)).